The chain runs to 107 residues: Phosphoribosyl-ATP pyrophosphatase (107 aa).

Belongs to the PRA-PH family.

The protein resides in the cytoplasm. The enzyme catalyses 1-(5-phospho-beta-D-ribosyl)-ATP + H2O = 1-(5-phospho-beta-D-ribosyl)-5'-AMP + diphosphate + H(+). The protein operates within amino-acid biosynthesis; L-histidine biosynthesis; L-histidine from 5-phospho-alpha-D-ribose 1-diphosphate: step 2/9. In Zymomonas mobilis subsp. mobilis (strain ATCC 31821 / ZM4 / CP4), this protein is Phosphoribosyl-ATP pyrophosphatase.